We begin with the raw amino-acid sequence, 160 residues long: Transcriptional regulator MraZ (160 aa).

SpoVT-AbrB domains follow at residues 5-50 (NFET…DGGY) and 93-136 (AVEC…SQAE).

Belongs to the MraZ family. Forms oligomers.

The protein localises to the cytoplasm. It is found in the nucleoid. The polypeptide is Transcriptional regulator MraZ (Geotalea daltonii (strain DSM 22248 / JCM 15807 / FRC-32) (Geobacter daltonii)).